Here is a 228-residue protein sequence, read N- to C-terminus: tRNA (guanine-N(1)-)-methyltransferase (228 aa).

Residues Gly111 and 131–136 each bind S-adenosyl-L-methionine; that span reads IGDFIL.

Belongs to the RNA methyltransferase TrmD family. Homodimer.

The protein resides in the cytoplasm. The enzyme catalyses guanosine(37) in tRNA + S-adenosyl-L-methionine = N(1)-methylguanosine(37) in tRNA + S-adenosyl-L-homocysteine + H(+). Specifically methylates guanosine-37 in various tRNAs. This is tRNA (guanine-N(1)-)-methyltransferase from Pelagibacter ubique (strain HTCC1062).